A 446-amino-acid polypeptide reads, in one-letter code: Ribosomal protein uS12 methylthiotransferase RimO (446 aa).

The 113-residue stretch at 9 to 121 (PKVGFVSLGC…VLDAIHAALP (113 aa)) folds into the MTTase N-terminal domain. [4Fe-4S] cluster-binding residues include cysteine 18, cysteine 54, cysteine 83, cysteine 152, cysteine 156, and cysteine 159. The region spanning 138-375 (LTPPHYAYLK…MAVQEAISRQ (238 aa)) is the Radical SAM core domain. Residues 378 to 445 (QRRVGQRQRV…AHDLYGMVVS (68 aa)) enclose the TRAM domain.

This sequence belongs to the methylthiotransferase family. RimO subfamily. [4Fe-4S] cluster serves as cofactor.

It is found in the cytoplasm. The enzyme catalyses L-aspartate(89)-[ribosomal protein uS12]-hydrogen + (sulfur carrier)-SH + AH2 + 2 S-adenosyl-L-methionine = 3-methylsulfanyl-L-aspartate(89)-[ribosomal protein uS12]-hydrogen + (sulfur carrier)-H + 5'-deoxyadenosine + L-methionine + A + S-adenosyl-L-homocysteine + 2 H(+). Functionally, catalyzes the methylthiolation of an aspartic acid residue of ribosomal protein uS12. This is Ribosomal protein uS12 methylthiotransferase RimO from Acidithiobacillus ferrooxidans (strain ATCC 23270 / DSM 14882 / CIP 104768 / NCIMB 8455) (Ferrobacillus ferrooxidans (strain ATCC 23270)).